A 798-amino-acid chain; its full sequence is Phenylalanine--tRNA ligase beta subunit (798 aa).

Residues 38–148 (IGNYEKVVVG…PEAPVGEKIE (111 aa)) enclose the tRNA-binding domain. Residues 400-475 (FTPKVIAVSL…RYLGYNNFPD (76 aa)) form the B5 domain. Positions 453, 459, 462, and 463 each coordinate Mg(2+). One can recognise an FDX-ACB domain in the interval 703-796 (SPYPEVKRDI…LEAKTGAKLR (94 aa)).

The protein belongs to the phenylalanyl-tRNA synthetase beta subunit family. Type 1 subfamily. Tetramer of two alpha and two beta subunits. Mg(2+) is required as a cofactor.

It is found in the cytoplasm. The enzyme catalyses tRNA(Phe) + L-phenylalanine + ATP = L-phenylalanyl-tRNA(Phe) + AMP + diphosphate + H(+). The sequence is that of Phenylalanine--tRNA ligase beta subunit from Carboxydothermus hydrogenoformans (strain ATCC BAA-161 / DSM 6008 / Z-2901).